The primary structure comprises 135 residues: Lysozyme 2 (135 aa).

An N-terminal signal peptide occupies residues M1–S18. The region spanning S19–S135 is the I-type lysozyme domain. 6 disulfide bridges follow: C24–C100, C29–C35, C40–C49, C62–C82, C72–C78, and C96–C114. Residue E32 is the Proton donor of the active site. The Nucleophile role is filled by D43. K55 to D61 is a binding site for substrate. Substrate-binding positions include Y86 and H107–G109.

As to expression, expressed in the epithelia of the basophil cells in the digestive tubules, but not in the epithelial cells lining the digestive ducts and stomach. Expressed at a much lower level in the style sac-midgut tissues. No expression detected in mantle, gills, labial palps or hemocytes.

It is found in the secreted. It carries out the reaction Hydrolysis of (1-&gt;4)-beta-linkages between N-acetylmuramic acid and N-acetyl-D-glucosamine residues in a peptidoglycan and between N-acetyl-D-glucosamine residues in chitodextrins.. With respect to regulation, activity decreased by 80% by addition of 0.01 M calcium, zinc or magnesium. Activity only decreased by 17% by addition of ammonium, and by 2% by addition of sodium. The main role of this lysozyme is in digestion. Has antibacterial activity against the Gram-positive bacterium P.cerevisiae and the Gram-negative bacteria E.coli and V.vulnificus. Shows some chitinase activity but no isopeptidase activity. This chain is Lysozyme 2, found in Crassostrea virginica (Eastern oyster).